The primary structure comprises 245 residues: Dehydrogenase/reductase SDR family member 6 (245 aa).

Residues 16-18 (QGI), Asp-37, and Asp-58 each bind NAD(+). A substrate-binding site is contributed by Arg-144. Residue Tyr-147 is the Proton acceptor of the active site. NAD(+) contacts are provided by residues Lys-151 and 180–184 (VDTPS). Substrate-binding residues include Arg-188 and Arg-205.

Belongs to the short-chain dehydrogenases/reductases (SDR) family. In terms of assembly, homotetramer.

It is found in the cytoplasm. The catalysed reaction is cis-4-hydroxy-L-proline + NAD(+) = 4-oxo-L-proline + NADH + H(+). The enzyme catalyses (R)-3-hydroxybutanoate + NAD(+) = acetoacetate + NADH + H(+). The protein operates within amino-acid metabolism. It participates in siderophore biosynthesis. Its function is as follows. NAD(H)-dependent dehydrogenase/reductase with a preference for cyclic substrates. Catalyzes stereoselective conversion of 4-oxo-L-proline to cis-4-hydroxy-L-proline, likely a detoxification mechanism for ketoprolines. Mediates the formation of 2,5-dihydroxybenzoate (2,5-DHBA), a siderophore that chelates free cytoplasmic iron, thereby regulating iron transport and homeostasis while protecting cells against free radical-induced oxidative stress. The iron-siderophore complex is imported into mitochondria, providing an iron source for mitochondrial metabolic processes in particular heme synthesis. May act as a 3-hydroxybutyrate dehydrogenase. This Aquarana catesbeiana (American bullfrog) protein is Dehydrogenase/reductase SDR family member 6 (bdh2).